The following is a 766-amino-acid chain: ABC-type oligopeptide transporter ABCB9 (766 aa).

8 consecutive transmembrane segments (helical) span residues 7-27, 47-67, 84-104, 116-136, 185-205, 225-245, 319-339, and 416-436; these read VVVT…IYVF, VLDL…ATIG, LVIT…LLLF, FWAL…LWWL, VAFL…ETFL, FSTA…AAGI, VFMF…FPII, and SGLT…HLVI. Residues 188–471 form the ABC transmembrane type-1 domain; it reads LVAASFFLIV…VGSVYSGLMQ (284 aa). The region spanning 504-740 is the ABC transporter domain; the sequence is VDFENVTFTY…GGLYAKLVQR (237 aa). An ATP-binding site is contributed by 539 to 546; it reads GPSGSGKS.

It belongs to the ABC transporter superfamily. ABCB family. MHC peptide exporter (TC 3.A.1.209) subfamily. In terms of assembly, homodimer. Interacts (via TMD0 region) with LAMP1; this interaction strongly stabilizes ABCB9 and protects ABCB9 against lysosomal degradation. Interacts (via TMD0 region) with LAMP2 (isoform LAMP-2B). Interacts (via TMD0) with YIF1B; this interaction allows (but is not essential) the ER-to-Golgi trafficking and strongly depends on a salt bridge within TMD0. In terms of tissue distribution, highly expressed in testis, and at moderate levels in brain, spinal cord, and thyroid. Not expressed in monocytes but strongly expressed during differentiation of monocytes to dendritic cells and macrophages.

The protein resides in the lysosome membrane. It catalyses the reaction a [oligopeptide](in) + ATP + H2O = a [oligopeptide](out) + ADP + phosphate + H(+). With respect to regulation, transport activity is limited by threshold levels of luminal peptide. ATP hydrolysis is reduced in the presence of the spatial challenging 18-mer peptide by 50% and the branched 16-mer peptide by 75%. Transport rate of the longer peptides is strongly reduced. Its function is as follows. ATP-dependent low-affinity peptide transporter which translocates a broad spectrum of peptides from the cytosol to the lysosomal lumen for degradation. Displays a broad peptide length specificity from 6-mer up to at least 59-mer peptides with an optimum of 23-mers. Binds and transports smaller and larger peptides with the same affinity. Favors positively charged, aromatic or hydrophobic residues in the N- and C-terminal positions whereas negatively charged residues as well as asparagine and methionine are not favored. This Homo sapiens (Human) protein is ABC-type oligopeptide transporter ABCB9.